A 394-amino-acid polypeptide reads, in one-letter code: 3-ketosteroid-9-alpha-monooxygenase, oxygenase component (394 aa).

A Rieske domain is found at 27-129 (WHCLGLAKDF…TLDQDGLLFV (103 aa)). Positions 68, 70, 87, and 90 each coordinate [2Fe-2S] cluster. Fe cation contacts are provided by Asn175, His181, and His186. Tyr245 contributes to the substrate binding site. Asp305 lines the Fe cation pocket.

In terms of assembly, homotrimer. The two-component system 3-ketosteroid-9-alpha-monooxygenase is composed of an oxygenase component KshA and a reductase component KshB. [2Fe-2S] cluster is required as a cofactor. The cofactor is Fe cation.

It carries out the reaction androsta-1,4-diene-3,17-dione + 2 reduced [2Fe-2S]-[ferredoxin] + O2 + 2 H(+) = 9alpha-hydroxyandrosta-1,4-diene-3,17-dione + 2 oxidized [2Fe-2S]-[ferredoxin] + H2O. May be involved in the degradation of cholic acid, a steroid acid found predominantly in the bile. In vitro, catalyzes the introduction of a 9alpha-hydroxyl moiety into the ring B of 3-ketosteroid substrates such as 1,4-androstadiene-3,17-dione (ADD), 4-androstene-3,17-dione (AD), 4-androstene-17beta-ol-3-one (testosterone), 4-pregnene-3,20-dione (progesterone), 3-oxo-23,24-bisnorcholesta-4-en-22-oate (4-BNC), 23,24-bisnorcholesta-4-ene-22-oate, 3-oxo-23,24-bisnorcholaesta-1,4-dien-22-oate (1,4-BNC), 23,24-bisnorcholesta-1,4-diene-22-oate and 3-oxo-23,24-bisnorcholesta-1,4-dien-22-oyl-coenzyme A thioester (1,4-BNC-CoA). KshA1 has the highest specificity for steroids possessing an isopropionyl side chain at C17. The sequence is that of 3-ketosteroid-9-alpha-monooxygenase, oxygenase component from Rhodococcus rhodochrous.